We begin with the raw amino-acid sequence, 462 residues long: A-type ATP synthase subunit B (462 aa).

It belongs to the ATPase alpha/beta chains family. In terms of assembly, has multiple subunits with at least A(3), B(3), C, D, E, F, H, I and proteolipid K(x).

The protein localises to the cell membrane. Its function is as follows. Component of the A-type ATP synthase that produces ATP from ADP in the presence of a proton gradient across the membrane. The B chain is a regulatory subunit. This Methanococcus vannielii (strain ATCC 35089 / DSM 1224 / JCM 13029 / OCM 148 / SB) protein is A-type ATP synthase subunit B.